Reading from the N-terminus, the 298-residue chain is Mitochondrial distribution and morphology protein 12 (298 aa).

Positions 1–298 constitute an SMP-LTD domain; the sequence is MSIELDWTGL…VYPHFYTLYL (298 aa). The segment at 118–142 is disordered; sequence SEHEESLSRWSDTESETGTCDSSSL. The segment covering 133–142 has biased composition (polar residues); the sequence is ETGTCDSSSL.

It belongs to the MDM12 family. In terms of assembly, component of the ER-mitochondria encounter structure (ERMES) or MDM complex, composed of MMM1, MDM10, MDM12 and MDM34. An MMM1 homodimer associates with one molecule of MDM12 on each side in a pairwise head-to-tail manner, and the SMP-LTD domains of MMM1 and MDM12 generate a continuous hydrophobic tunnel for phospholipid trafficking.

Its subcellular location is the mitochondrion outer membrane. The protein resides in the endoplasmic reticulum membrane. Functionally, component of the ERMES/MDM complex, which serves as a molecular tether to connect the endoplasmic reticulum (ER) and mitochondria. Components of this complex are involved in the control of mitochondrial shape and protein biogenesis, and function in nonvesicular lipid trafficking between the ER and mitochondria. MDM12 is required for the interaction of the ER-resident membrane protein MMM1 and the outer mitochondrial membrane-resident beta-barrel protein MDM10. The MDM12-MMM1 subcomplex functions in the major beta-barrel assembly pathway that is responsible for biogenesis of all mitochondrial outer membrane beta-barrel proteins, and acts in a late step after the SAM complex. The MDM10-MDM12-MMM1 subcomplex further acts in the TOM40-specific pathway after the action of the MDM12-MMM1 complex. Essential for establishing and maintaining the structure of mitochondria and maintenance of mtDNA nucleoids. This chain is Mitochondrial distribution and morphology protein 12, found in Malassezia globosa (strain ATCC MYA-4612 / CBS 7966) (Dandruff-associated fungus).